An 85-amino-acid polypeptide reads, in one-letter code: MKLLLLLIVSASMLIESLVNADGYIKRRDGCKVACLVGNEGCDKECKAYGGSYGYCWTWGLACWCEGLPDDKTWKSETNTCGGKK.

An N-terminal signal peptide occupies residues 1 to 21; it reads MKLLLLLIVSASMLIESLVNA. Positions 22–82 constitute an LCN-type CS-alpha/beta domain; that stretch reads DGYIKRRDGC…TWKSETNTCG (61 aa). Intrachain disulfides connect Cys-31–Cys-81, Cys-35–Cys-56, Cys-42–Cys-63, and Cys-46–Cys-65. Gly-82 carries the post-translational modification Glycine amide.

This sequence belongs to the long (4 C-C) scorpion toxin superfamily. Sodium channel inhibitor family. Beta subfamily. As to expression, expressed by the venom gland.

The protein localises to the secreted. Its function is as follows. Depressant insect toxins cause a transient contraction paralysis followed by a slow flaccid paralysis. They bind voltage-independently to sodium channels (Nav) and block action potentials, primarily by depolarizing the axonal membrane and suppressing the sodium current. In Leiurus hebraeus (Hebrew deathstalker scorpion), this protein is Insect toxin 2-53.